The chain runs to 340 residues: DNA-directed RNA polymerase subunit alpha (340 aa).

Residues 1 to 233 (MYKNWRDLIR…EQLSIFINFD (233 aa)) are alpha N-terminal domain (alpha-NTD). The alpha C-terminal domain (alpha-CTD) stretch occupies residues 246–340 (DEIDKINENL…RLRGEQNEEE (95 aa)).

It belongs to the RNA polymerase alpha chain family. In terms of assembly, homodimer. The RNAP catalytic core consists of 2 alpha, 1 beta, 1 beta' and 1 omega subunit. When a sigma factor is associated with the core the holoenzyme is formed, which can initiate transcription.

It catalyses the reaction RNA(n) + a ribonucleoside 5'-triphosphate = RNA(n+1) + diphosphate. In terms of biological role, DNA-dependent RNA polymerase catalyzes the transcription of DNA into RNA using the four ribonucleoside triphosphates as substrates. The chain is DNA-directed RNA polymerase subunit alpha from Pelobacter propionicus (strain DSM 2379 / NBRC 103807 / OttBd1).